Here is a 442-residue protein sequence, read N- to C-terminus: MKPKNFPLARYVLGAMLAFLFVGVAQAQTETTSIAEVTYAINNLFLLAAAVLVLFMQAGFAMLEAGLSSHKNTVNVLFKNTFDVCVGVLLYFLFGYSLMYGENPVLGGFFGWGGFGITNNLDNVEGLSPQVDWLFQAAFAATAATIVSGAVMGRMYFKAYLIYSAVITGLVYPISGHWKWGGGWLDKLGFHDFAGSLLVHSVGGFAALAAVVVMGPRIGRFEGNKINSLGYQGITSSSLGVFILWVGWYGFNPGSQLAFVGALNTNTTMLIAVNTTLSAAAGGLAALAFDWITENKRKPNLLVTLNGILGGLVGITAGCDTVSNWSAIAIGVVAGILSVLGTKLLDRLRIDDGVGAWPVHGLCGIWGGIAVGIFSTNVEHKLSAQIVGSLVIPFWAFITMFFLFYVMDLWGILRVKPSQEKVGLDIVEHGQTEKGVEIAFED.

A run of 13 helical transmembrane segments spans residues Asn-5–Ala-25, Leu-44–Glu-64, Thr-81–Gly-101, Pro-104–Val-124, Trp-133–Gly-153, Met-155–Ser-175, Phe-193–Val-213, Gly-240–Val-260, Met-269–Phe-289, Pro-299–Cys-319, Trp-325–Leu-345, Val-354–Phe-374, and Ile-386–Val-406.

Belongs to the ammonia transporter channel (TC 1.A.11.2) family.

It localises to the cell membrane. This chain is Putative ammonium transporter sll1017, found in Synechocystis sp. (strain ATCC 27184 / PCC 6803 / Kazusa).